Here is a 396-residue protein sequence, read N- to C-terminus: MSEYSLFTSESVSEGHPDKIADQISDAVLDAIIAQDKYARVACETLVKTGVAIIAGEVTTSAWVDLEDLVRKVIIDIGYNSSDVGFDGATCAVMNIIGKQSVDIAQGVDRSKPEDQGAGDQGLMFGYASNETEVLMPAPICFSHRLVERQAEARKSGLLPWLRPDAKSQVTCRYENGKVVGIDAVVLSTQHNPEVSQKDLQEAVMELIVKHTLPAELLHKGTQYHINPTGNFIIGGPVGDCGLTGRKIIVDSYGGMARHGGGAFSGKDPSKVDRSAAYAGRYVAKNIVAAGLAERCEIQVSYAIGVAQPTSISINTFGTGKVSDDKIIQLVRECFDLRPYAITTMLDLLHPMYQETAAYGHFGRTPQQKTVGDDTFTTFTWERTDRAQSLRDAAGL.

ATP is bound at residue histidine 16. Aspartate 18 is a binding site for Mg(2+). Glutamate 44 contributes to the K(+) binding site. L-methionine-binding residues include glutamate 57 and glutamine 100. The tract at residues 100 to 110 (QSVDIAQGVDR) is flexible loop. ATP contacts are provided by residues 165–167 (DAK), aspartate 240, 246–247 (RK), alanine 263, and lysine 267. Aspartate 240 is an L-methionine binding site. Lysine 271 contributes to the L-methionine binding site.

This sequence belongs to the AdoMet synthase family. In terms of assembly, homotetramer; dimer of dimers. Mg(2+) is required as a cofactor. The cofactor is K(+).

It is found in the cytoplasm. It catalyses the reaction L-methionine + ATP + H2O = S-adenosyl-L-methionine + phosphate + diphosphate. Its pathway is amino-acid biosynthesis; S-adenosyl-L-methionine biosynthesis; S-adenosyl-L-methionine from L-methionine: step 1/1. Catalyzes the formation of S-adenosylmethionine (AdoMet) from methionine and ATP. The overall synthetic reaction is composed of two sequential steps, AdoMet formation and the subsequent tripolyphosphate hydrolysis which occurs prior to release of AdoMet from the enzyme. The sequence is that of S-adenosylmethionine synthase from Pseudomonas putida (strain ATCC 700007 / DSM 6899 / JCM 31910 / BCRC 17059 / LMG 24140 / F1).